The chain runs to 959 residues: Glutamate receptor 3.4 (959 aa).

Residues 1–35 (MGFLVMIREVSMAKAIRVVLLCVSVLWVVPKECAC) form the signal peptide. The Extracellular segment spans residues 36-613 (RSNFSRNSSS…SPWSFLKPFT (578 aa)). Asn-38, Asn-42, Asn-108, Asn-365, Asn-378, Asn-404, Asn-443, Asn-461, and Asn-576 each carry an N-linked (GlcNAc...) asparagine glycan. Residues 614–634 (IEMWAVTGGFFLFVGAMVWIL) form a helical membrane-spanning segment. The Cytoplasmic segment spans residues 635 to 643 (EHRFNQEFR). The chain crosses the membrane as a helical span at residues 644 to 664 (GPPRRQLITIFWFSFSTMFFS). Over 665 to 675 (HRENTVSSLGR) the chain is Cytoplasmic. The chain crosses the membrane as a helical span at residues 676–696 (FVLIIWLFVVLIINSSYTASL). The Extracellular portion of the chain corresponds to 697–857 (TSILTIRQLT…SEDSQLSLKS (161 aa)). The helical transmembrane segment at 858–878 (FWGLFLICGITCFMALTVFFW) threads the bilayer. Residues 879 to 959 (RVFWQYQRLL…TSQSQHGEIT (81 aa)) lie on the Cytoplasmic side of the membrane. 2 disordered regions span residues 893 to 913 (DEER…SRAP) and 936 to 959 (KSSK…GEIT). Over residues 943–959 (STQSAAGTSQSQHGEIT) the composition is skewed to low complexity.

The protein belongs to the glutamate-gated ion channel (TC 1.A.10.1) family. Forms a heteromeric channel with GLR3.2. In terms of tissue distribution, highly expressed in roots and at lower levels in leaves and siliques. Expressed in seedlings, cotyledons, roots (e.g. root hairs, epidermis and cortex cells), stems, leaves (e.g. vascular bundles and hydathodes), and siliques. Expressed in root phloem.

It localises to the cell membrane. The protein localises to the plastid. It is found in the chloroplast membrane. Functionally, glutamate-gated receptor that probably acts as a non-selective cation channel, at least in hypocotyls. Can be triggered by Asn, Ser, Gly and, to a lower extent, Ala, Cys and Glu. May be involved in light-signal transduction and calcium homeostasis via the regulation of calcium influx into cells. Plays an important role in the calcium-based fast transmission of environmental stress. Acts as a negative regulator of lateral root initiation and development. May restrict primordia numbers and position along the root axis by a signaling process originating in the phloem. AtGLR3.4-mediated cytosolic calcium influx may be involved in the regulation of seed germination under salt stress by modulating sodium accumulation through the SOS pathway. In Arabidopsis thaliana (Mouse-ear cress), this protein is Glutamate receptor 3.4.